The sequence spans 160 residues: Cytochrome b6-f complex subunit 4 (160 aa).

3 helical membrane passes run 36-56, 95-115, and 131-151; these read LLYI…GLAV, LLGV…PFPE, and TVFS…ALPI.

This sequence belongs to the cytochrome b family. PetD subfamily. The 4 large subunits of the cytochrome b6-f complex are cytochrome b6, subunit IV (17 kDa polypeptide, petD), cytochrome f and the Rieske protein, while the 4 small subunits are petG, petL, petM and petN. The complex functions as a dimer.

The protein localises to the plastid. It localises to the chloroplast thylakoid membrane. Its function is as follows. Component of the cytochrome b6-f complex, which mediates electron transfer between photosystem II (PSII) and photosystem I (PSI), cyclic electron flow around PSI, and state transitions. The sequence is that of Cytochrome b6-f complex subunit 4 from Huperzia lucidula (Shining clubmoss).